We begin with the raw amino-acid sequence, 236 residues long: NAP1-binding protein 2 (236 aa).

The residue at position 102 (Ser102) is a Phosphoserine. Residues 110–171 (IVNQRAVALY…PEEFVSYIQP (62 aa)) enclose the SH3 domain. 2 positions are modified to phosphoserine: Ser196 and Ser235.

Interacts with PBS2 and PTC1.

It is found in the cytoplasm. In terms of biological role, negatively regulates the high-osmolarity glycerol (HOG) pathway through its negative regulation of the HOG1 kinase activity. Mediates the binding between the PTC1 phosphatase and the PBS2 MAP/ERK kinase (MEK). With PTC1, regulates endoplasmic reticulum inheritance through the cell wall integrity (CWI) MAPK pathway by modulating the MAPK, SLT2. The sequence is that of NAP1-binding protein 2 (NBP2) from Saccharomyces cerevisiae (strain ATCC 204508 / S288c) (Baker's yeast).